The chain runs to 277 residues: Ras suppressor protein 1 (277 aa).

The segment at 1–24 (MSKSLKKLVEESREKNQPEVDMSD) is disordered. Position 2 is an N-acetylserine (serine 2). Positions 7 to 24 (KLVEESREKNQPEVDMSD) are enriched in basic and acidic residues. LRR repeat units follow at residues 41-63 (HITQ…AELK), 64-85 (NLEV…ISSL), 87-109 (KLKH…GSLP), 110-133 (ALEV…FFYL), 135-156 (TLRA…IGKL), 158-179 (KLQI…IGEL), and 181-202 (QLKE…LGNL). Residues 250 to 277 (MQANPEPPKKNNDKSKKISRKPLAAKNR) form a disordered region. The span at 256–265 (PPKKNNDKSK) shows a compositional bias: basic and acidic residues.

Functionally, potentially plays a role in the Ras signal transduction pathway. Capable of suppressing v-Ras transformation in vitro. The polypeptide is Ras suppressor protein 1 (RSU1) (Homo sapiens (Human)).